The sequence spans 96 residues: Essential MCU regulator, mitochondrial (96 aa).

The N-terminal 34 residues, 1-34, are a transit peptide targeting the mitochondrion; it reads MIVSRLTFPLQAAKLVARKAAGNPSNSIIQRRHM. A helical transmembrane segment spans residues 52–72; the sequence is PFGLFAIFCAVIPGLFIGATI.

This sequence belongs to the SMDT1/EMRE family.

Its subcellular location is the mitochondrion inner membrane. In terms of biological role, essential regulatory subunit of the mitochondrial calcium uniporter (mcu) channel, a protein that mediates calcium uptake into mitochondria. The protein is Essential MCU regulator, mitochondrial of Drosophila pseudoobscura pseudoobscura (Fruit fly).